Consider the following 471-residue polypeptide: Cleavage and polyadenylation specificity factor subunit 7 (471 aa).

A disordered region spans residues 34 to 68 (VLTAASQPSDDRSSSTEPPPPVRQEPAPKPNNKTP). Positions 50–62 (EPPPPVRQEPAPK) are enriched in pro residues. Positions 82 to 162 (AAVYVGSFSW…EKVDVRPATR (81 aa)) constitute an RRM domain. A disordered region spans residues 176 to 220 (ECVRVPRGGIPPRAHSRDSSDSADGRATPSENLVPSSARVDKPPS). A compositionally biased stretch (basic and acidic residues) spans 190 to 199 (HSRDSSDSAD). Residue Thr203 is modified to Phosphothreonine. Residue Ser205 is modified to Phosphoserine. Lys354 participates in a covalent cross-link: Glycyl lysine isopeptide (Lys-Gly) (interchain with G-Cter in SUMO2). Residues 409 to 471 (SVGASGSSSR…HRDRERDRHH (63 aa)) are disordered. A phosphoserine mark is found at Ser413 and Ser423. Residues 418–469 (RKRHRSRERSPSRSRESSRRHRDLLHNEDRHDDYFQERNREHERHRDRERDR) form an arg/Ser-rich domain region. 2 stretches are compositionally biased toward basic and acidic residues: residues 425 to 434 (ERSPSRSRES) and 441 to 471 (LLHNEDRHDDYFQERNREHERHRDRERDRHH).

It belongs to the RRM CPSF6/7 family. Component of the cleavage factor Im (CFIm) complex which is a heterotetramer composed of two subunits of NUDT21/CPSF5 and two subunits of CPSF6 or CPSF7 or a heterodimer of CPSF6 and CPSF7. The cleavage factor Im (CFIm) complex associates with the CPSF and CSTF complexes to promote the assembly of the core mRNA 3'-processing machinery. Interacts with NUDT21/CPSF5. Interacts (via Arg/Ser-rich domain) with FIP1L1 (preferentially via unphosphorylated form and Arg/Glu/Asp-rich region); this interaction mediates, at least in part, the interaction between the CFIm and CPSF complexes and may be inhibited by CPSF7 hyper-phosphorylation. In terms of processing, phosphorylated. Post-translationally, asymmetrically dimethylated on arginine residues by PRMT1.

It localises to the nucleus. The protein resides in the cytoplasm. Functionally, component of the cleavage factor Im (CFIm) complex that functions as an activator of the pre-mRNA 3'-end cleavage and polyadenylation processing required for the maturation of pre-mRNA into functional mRNAs. CFIm contributes to the recruitment of multiprotein complexes on specific sequences on the pre-mRNA 3'-end, so called cleavage and polyadenylation signals (pA signals). Most pre-mRNAs contain multiple pA signals, resulting in alternative cleavage and polyadenylation (APA) producing mRNAs with variable 3'-end formation. The CFIm complex acts as a key regulator of cleavage and polyadenylation site choice during APA through its binding to 5'-UGUA-3' elements localized in the 3'-untranslated region (UTR) for a huge number of pre-mRNAs. CPSF7 activates directly the mRNA 3'-processing machinery. Binds to pA signals in RNA substrates. The chain is Cleavage and polyadenylation specificity factor subunit 7 from Mus musculus (Mouse).